A 208-amino-acid polypeptide reads, in one-letter code: Small ribosomal subunit protein uS2 (208 aa).

Residues 189–208 are disordered; it reads KPDQDLPVPPEEFETKLVQS.

This sequence belongs to the universal ribosomal protein uS2 family.

The sequence is that of Small ribosomal subunit protein uS2 (rps2) from Pyrobaculum aerophilum (strain ATCC 51768 / DSM 7523 / JCM 9630 / CIP 104966 / NBRC 100827 / IM2).